Consider the following 617-residue polypeptide: Proline--tRNA ligase (617 aa).

It belongs to the class-II aminoacyl-tRNA synthetase family. ProS type 1 subfamily. Homodimer.

The protein resides in the cytoplasm. It carries out the reaction tRNA(Pro) + L-proline + ATP = L-prolyl-tRNA(Pro) + AMP + diphosphate. Functionally, catalyzes the attachment of proline to tRNA(Pro) in a two-step reaction: proline is first activated by ATP to form Pro-AMP and then transferred to the acceptor end of tRNA(Pro). As ProRS can inadvertently accommodate and process non-cognate amino acids such as alanine and cysteine, to avoid such errors it has two additional distinct editing activities against alanine. One activity is designated as 'pretransfer' editing and involves the tRNA(Pro)-independent hydrolysis of activated Ala-AMP. The other activity is designated 'posttransfer' editing and involves deacylation of mischarged Ala-tRNA(Pro). The misacylated Cys-tRNA(Pro) is not edited by ProRS. In Streptococcus pneumoniae (strain ATCC 700669 / Spain 23F-1), this protein is Proline--tRNA ligase.